The sequence spans 58 residues: Ribosome modulation factor (58 aa).

It belongs to the ribosome modulation factor family.

It localises to the cytoplasm. During stationary phase, converts 70S ribosomes to an inactive dimeric form (100S ribosomes). The sequence is that of Ribosome modulation factor from Tolumonas auensis (strain DSM 9187 / NBRC 110442 / TA 4).